We begin with the raw amino-acid sequence, 313 residues long: MLDNVLRIATRQSPLALWQAHYVKDKLMASHPGLVVELVPMVTRGDVILDTPLAKVGGKGLFVKELEVALLENRADIAVHSMKDVPVEFPQGLGLVTICKREDPRDAFVSNTYDSLDALPAGSIVGTSSLRRQCQLAERRPDLIIRSLRGNVGTRLSKLDNGEYDAIILAVAGLKRLGLESRIRAALPPEISLPAVGQGAVGIECRLDDARTRELLAALNHHETALRVTAERAMNTRLEGGCQVPIGSYAELIDGEIWLRALVGAPDGSQIIRGERRGAPQDAEQMGISLAEELLNNGAREILAEVYNGDAPA.

C242 is subject to S-(dipyrrolylmethanemethyl)cysteine.

This sequence belongs to the HMBS family. As to quaternary structure, monomer. The cofactor is dipyrromethane.

The catalysed reaction is 4 porphobilinogen + H2O = hydroxymethylbilane + 4 NH4(+). It participates in porphyrin-containing compound metabolism; protoporphyrin-IX biosynthesis; coproporphyrinogen-III from 5-aminolevulinate: step 2/4. In terms of biological role, tetrapolymerization of the monopyrrole PBG into the hydroxymethylbilane pre-uroporphyrinogen in several discrete steps. This Escherichia coli O45:K1 (strain S88 / ExPEC) protein is Porphobilinogen deaminase.